The primary structure comprises 157 residues: Jacalin-related lectin 15 (157 aa).

The Jacalin-type lectin domain occupies 13–152 (ADKLEAKGGN…LTSLGAYFAP (140 aa)).

The protein belongs to the jacalin lectin family. Expressed in stems, leaves and flowers. Not detected in roots.

Its function is as follows. Confers broad resistance to potexviruses. Inhibits virus accumulation at the cellular level. The polypeptide is Jacalin-related lectin 15 (JAL15) (Arabidopsis thaliana (Mouse-ear cress)).